We begin with the raw amino-acid sequence, 160 residues long: Protein-export protein SecB (160 aa).

The protein belongs to the SecB family. Homotetramer, a dimer of dimers. One homotetramer interacts with 1 SecA dimer.

It localises to the cytoplasm. In terms of biological role, one of the proteins required for the normal export of preproteins out of the cell cytoplasm. It is a molecular chaperone that binds to a subset of precursor proteins, maintaining them in a translocation-competent state. It also specifically binds to its receptor SecA. The polypeptide is Protein-export protein SecB (Rhizobium etli (strain ATCC 51251 / DSM 11541 / JCM 21823 / NBRC 15573 / CFN 42)).